Reading from the N-terminus, the 371-residue chain is MPLFSHRFTTASSSSPASPSYYNKPSSKTHKPNSSSSSYTSSRIHVAIIFFSLVSVFIGVAGTIFALSSTGPASVYRCGGSKDTSRVVSASRKLGGDGGNNGVVVERRKLLGFVGIQTGFDSGDRRTALRSTWFPSDPDSLLRLEQATGLAFRFVIGKSKDAKKMAELEKEIKEYRDFVLLDTEEEYIRLPYKTLAFFKAAFKLFEADYYVKADDDIYLRPDRLATLLANERLHSQTYIGCMKKGPVITDPKLKWYEKQGNLIGNEYFLHAYGPIYVLSAEIVASLAAARNGSLRMFNNEDVTIGSWMLAMDVHHEDNRALCDPHCSPKSIAVWDIPKCSGLCDPESRLKELHKTDMCSKSPTLPPDDIDQ.

The segment at 1–36 (MPLFSHRFTTASSSSPASPSYYNKPSSKTHKPNSSS) is disordered. Over residues 11 to 36 (ASSSSPASPSYYNKPSSKTHKPNSSS) the composition is skewed to low complexity. The chain crosses the membrane as a helical; Signal-anchor for type II membrane protein span at residues 46 to 66 (VAIIFFSLVSVFIGVAGTIFA). Asparagine 291 carries N-linked (GlcNAc...) asparagine glycosylation.

The protein belongs to the glycosyltransferase 31 family. Mn(2+) serves as cofactor.

It is found in the golgi apparatus membrane. It functions in the pathway protein modification; protein glycosylation. Functionally, beta-1,3-galactosyltransferase that transfers galactose from UDP-galactose to substrates with a terminal glycosyl residue. The polypeptide is Probable beta-1,3-galactosyltransferase 12 (B3GALT12) (Arabidopsis thaliana (Mouse-ear cress)).